Reading from the N-terminus, the 83-residue chain is uncharacterized protein (83 aa).

The helical transmembrane segment at 50–70 (IMVFLGEAWIILIPFAIFCII) threads the bilayer.

It belongs to the plectrovirus ORF7 family.

It is found in the host membrane. This is an uncharacterized protein from Spiroplasma melliferum (SpV1).